The following is a 238-amino-acid chain: NADH-quinone oxidoreductase subunit C (238 aa).

Residues 1–20 (MSSPDQNPSDAAGQTGSSNE) are disordered.

This sequence belongs to the complex I 30 kDa subunit family. NDH-1 is composed of 14 different subunits. Subunits NuoB, C, D, E, F, and G constitute the peripheral sector of the complex.

Its subcellular location is the cell membrane. It catalyses the reaction a quinone + NADH + 5 H(+)(in) = a quinol + NAD(+) + 4 H(+)(out). NDH-1 shuttles electrons from NADH, via FMN and iron-sulfur (Fe-S) centers, to quinones in the respiratory chain. The immediate electron acceptor for the enzyme in this species is believed to be a menaquinone. Couples the redox reaction to proton translocation (for every two electrons transferred, four hydrogen ions are translocated across the cytoplasmic membrane), and thus conserves the redox energy in a proton gradient. The sequence is that of NADH-quinone oxidoreductase subunit C from Mycobacterium ulcerans (strain Agy99).